The sequence spans 92 residues: MADALDLAPLLAAGWSHDPERGVLSKTFGFETFVAAFGFMTRVALWAEKWNHHPDWSNSYGTVEVSLTSHDAGGLTERDLKLARKIDELAAA.

The protein belongs to the pterin-4-alpha-carbinolamine dehydratase family.

The catalysed reaction is (4aS,6R)-4a-hydroxy-L-erythro-5,6,7,8-tetrahydrobiopterin = (6R)-L-erythro-6,7-dihydrobiopterin + H2O. The protein is Putative pterin-4-alpha-carbinolamine dehydratase of Cereibacter sphaeroides (strain ATCC 17023 / DSM 158 / JCM 6121 / CCUG 31486 / LMG 2827 / NBRC 12203 / NCIMB 8253 / ATH 2.4.1.) (Rhodobacter sphaeroides).